Here is a 411-residue protein sequence, read N- to C-terminus: Putative ion-transport protein YfeO (411 aa).

11 helical membrane passes run 9-29 (MLLL…VLIA), 54-74 (DSPF…GLII), 99-119 (ALPG…SLGP), 149-169 (ILAS…AALI), 186-206 (LFAP…FFHP), 223-243 (IASG…AVWC), 258-278 (VLIL…GGPL), 296-316 (LGAG…VIAA), 322-342 (GGRI…LHAH), 343-363 (VEAV…VLVV), and 386-406 (LLCI…LLAA).

The protein belongs to the chloride channel (TC 2.A.49) family.

The protein resides in the cell membrane. In Salmonella choleraesuis (strain SC-B67), this protein is Putative ion-transport protein YfeO.